The primary structure comprises 359 residues: Methylthioribose-1-phosphate isomerase (359 aa).

Residues 52–54, R90, and Q200 contribute to the substrate site; that span reads RGA. The active-site Proton donor is D241. Residue 251–252 coordinates substrate; it reads NK.

Belongs to the eIF-2B alpha/beta/delta subunits family. MtnA subfamily.

The catalysed reaction is 5-(methylsulfanyl)-alpha-D-ribose 1-phosphate = 5-(methylsulfanyl)-D-ribulose 1-phosphate. It participates in amino-acid biosynthesis; L-methionine biosynthesis via salvage pathway; L-methionine from S-methyl-5-thio-alpha-D-ribose 1-phosphate: step 1/6. In terms of biological role, catalyzes the interconversion of methylthioribose-1-phosphate (MTR-1-P) into methylthioribulose-1-phosphate (MTRu-1-P). This Sulfurimonas denitrificans (strain ATCC 33889 / DSM 1251) (Thiomicrospira denitrificans (strain ATCC 33889 / DSM 1251)) protein is Methylthioribose-1-phosphate isomerase.